The primary structure comprises 274 residues: Elongation factor Ts (274 aa).

The interval 82 to 85 (TDFV) is involved in Mg(2+) ion dislocation from EF-Tu.

It belongs to the EF-Ts family.

It localises to the cytoplasm. Its function is as follows. Associates with the EF-Tu.GDP complex and induces the exchange of GDP to GTP. It remains bound to the aminoacyl-tRNA.EF-Tu.GTP complex up to the GTP hydrolysis stage on the ribosome. The sequence is that of Elongation factor Ts from Christiangramia forsetii (strain DSM 17595 / CGMCC 1.15422 / KT0803) (Gramella forsetii).